We begin with the raw amino-acid sequence, 408 residues long: Histidine--tRNA ligase (408 aa).

This sequence belongs to the class-II aminoacyl-tRNA synthetase family. In terms of assembly, homodimer.

It is found in the cytoplasm. The enzyme catalyses tRNA(His) + L-histidine + ATP = L-histidyl-tRNA(His) + AMP + diphosphate + H(+). This is Histidine--tRNA ligase from Campylobacter jejuni subsp. jejuni serotype O:23/36 (strain 81-176).